The sequence spans 360 residues: 3-dehydroquinate synthase (360 aa).

NAD(+) is bound by residues 71-76 (DGEQYK), 105-109 (GVVGD), 129-130 (TT), Lys142, Lys151, and 169-172 (TLNT). Glu184, His248, and His265 together coordinate Zn(2+).

It belongs to the sugar phosphate cyclases superfamily. Dehydroquinate synthase family. Co(2+) serves as cofactor. It depends on Zn(2+) as a cofactor. Requires NAD(+) as cofactor.

The protein resides in the cytoplasm. It carries out the reaction 7-phospho-2-dehydro-3-deoxy-D-arabino-heptonate = 3-dehydroquinate + phosphate. It participates in metabolic intermediate biosynthesis; chorismate biosynthesis; chorismate from D-erythrose 4-phosphate and phosphoenolpyruvate: step 2/7. In terms of biological role, catalyzes the conversion of 3-deoxy-D-arabino-heptulosonate 7-phosphate (DAHP) to dehydroquinate (DHQ). This is 3-dehydroquinate synthase from Coxiella burnetii (strain CbuK_Q154) (Coxiella burnetii (strain Q154)).